Reading from the N-terminus, the 451-residue chain is Cyclin-dependent kinase 18 (451 aa).

The segment at 39–61 (RNEDGRDEPGQLSPGVQYQQRQN) is disordered. At S51 the chain carries Phosphoserine. Polar residues predominate over residues 52–61 (PGVQYQQRQN). 2 positions are modified to phosphoserine: S66 and S109. One can recognise a Protein kinase domain in the interval 121–402 (YVKLDKLGEG…AEAALSHPYF (282 aa)). ATP contacts are provided by residues 127 to 135 (LGEGTYATV) and K150. D242 serves as the catalytic Proton acceptor. S417 and S420 each carry phosphoserine.

It belongs to the protein kinase superfamily. CMGC Ser/Thr protein kinase family. CDC2/CDKX subfamily. In terms of tissue distribution, in brain, kidney, intestine and at a much lower level, in fetal tissues.

The catalysed reaction is L-seryl-[protein] + ATP = O-phospho-L-seryl-[protein] + ADP + H(+). The enzyme catalyses L-threonyl-[protein] + ATP = O-phospho-L-threonyl-[protein] + ADP + H(+). May play a role in signal transduction cascades in terminally differentiated cells. This Rattus norvegicus (Rat) protein is Cyclin-dependent kinase 18 (Cdk18).